Consider the following 287-residue polypeptide: ATP synthase gamma chain (287 aa).

This sequence belongs to the ATPase gamma chain family. As to quaternary structure, F-type ATPases have 2 components, CF(1) - the catalytic core - and CF(0) - the membrane proton channel. CF(1) has five subunits: alpha(3), beta(3), gamma(1), delta(1), epsilon(1). CF(0) has three main subunits: a, b and c.

The protein resides in the cell inner membrane. Produces ATP from ADP in the presence of a proton gradient across the membrane. The gamma chain is believed to be important in regulating ATPase activity and the flow of protons through the CF(0) complex. The protein is ATP synthase gamma chain of Xanthomonas campestris pv. campestris (strain B100).